Reading from the N-terminus, the 491-residue chain is Angiopoietin-related protein 1 (491 aa).

Positions 1-23 (MKTFTWTLGVLFFLLVDTGHCRG) are cleaved as a signal peptide. Residues 80–168 (ITRMDLENLK…LNVTTEMLKM (89 aa)) are a coiled coil. N160 and N188 each carry an N-linked (GlcNAc...) asparagine glycan. The Fibrinogen C-terminal domain occupies 271–491 (FINEGPFKDC…AVQMMIKPID (221 aa)). 2 cysteine pairs are disulfide-bonded: C280–C309 and C432–C445.

As to expression, highly expressed in adrenal gland, placenta, thyroid gland, heart, skeletal muscle and small intestine. Weakly expressed in testis, ovary, colon, pancreas, kidney and stomach.

It is found in the secreted. The chain is Angiopoietin-related protein 1 (ANGPTL1) from Homo sapiens (Human).